The primary structure comprises 300 residues: Sulfate adenylyltransferase subunit 2 (300 aa).

The segment at 281-300 (RAIDRDEAGSMEKKKREGYF) is disordered.

This sequence belongs to the PAPS reductase family. CysD subfamily. In terms of assembly, heterodimer composed of CysD, the smaller subunit, and CysN.

The catalysed reaction is sulfate + ATP + H(+) = adenosine 5'-phosphosulfate + diphosphate. Its pathway is sulfur metabolism; hydrogen sulfide biosynthesis; sulfite from sulfate: step 1/3. With CysN forms the ATP sulfurylase (ATPS) that catalyzes the adenylation of sulfate producing adenosine 5'-phosphosulfate (APS) and diphosphate, the first enzymatic step in sulfur assimilation pathway. APS synthesis involves the formation of a high-energy phosphoric-sulfuric acid anhydride bond driven by GTP hydrolysis by CysN coupled to ATP hydrolysis by CysD. The protein is Sulfate adenylyltransferase subunit 2 of Brucella canis (strain ATCC 23365 / NCTC 10854 / RM-666).